A 297-amino-acid chain; its full sequence is Nucleotide-binding protein Bsph_0448 (297 aa).

19-26 (GMSGAGKT) is a binding site for ATP. 70 to 73 (DMRG) provides a ligand contact to GTP.

The protein belongs to the RapZ-like family.

Functionally, displays ATPase and GTPase activities. This is Nucleotide-binding protein Bsph_0448 from Lysinibacillus sphaericus (strain C3-41).